Reading from the N-terminus, the 408-residue chain is Acetylornithine/succinyldiaminopimelate aminotransferase (408 aa).

Pyridoxal 5'-phosphate-binding positions include 108 to 109 and Phe141; that span reads GA. N(2)-acetyl-L-ornithine is bound at residue Arg144. Residue 226 to 229 coordinates pyridoxal 5'-phosphate; that stretch reads DEIQ. At Lys255 the chain carries N6-(pyridoxal phosphate)lysine. Thr283 is a N(2)-acetyl-L-ornithine binding site. Position 284 (Thr284) interacts with pyridoxal 5'-phosphate.

The protein belongs to the class-III pyridoxal-phosphate-dependent aminotransferase family. ArgD subfamily. In terms of assembly, homodimer. The cofactor is pyridoxal 5'-phosphate.

The protein resides in the cytoplasm. The enzyme catalyses N(2)-acetyl-L-ornithine + 2-oxoglutarate = N-acetyl-L-glutamate 5-semialdehyde + L-glutamate. The catalysed reaction is N-succinyl-(2S,6S)-2,6-diaminopimelate + 2-oxoglutarate = (S)-2-succinylamino-6-oxoheptanedioate + L-glutamate. It participates in amino-acid biosynthesis; L-arginine biosynthesis; N(2)-acetyl-L-ornithine from L-glutamate: step 4/4. Its pathway is amino-acid biosynthesis; L-lysine biosynthesis via DAP pathway; LL-2,6-diaminopimelate from (S)-tetrahydrodipicolinate (succinylase route): step 2/3. In terms of biological role, involved in both the arginine and lysine biosynthetic pathways. The chain is Acetylornithine/succinyldiaminopimelate aminotransferase from Buchnera aphidicola subsp. Acyrthosiphon pisum (strain APS) (Acyrthosiphon pisum symbiotic bacterium).